Consider the following 419-residue polypeptide: Dynein regulatory complex protein 9 (419 aa).

Disordered stretches follow at residues 1–47 and 393–419; these read MEGE…SPEV and SFKM…RGKK. A compositionally biased stretch (acidic residues) spans 34–44; it reads EELEEEEEETS. Residues 371 to 400 enclose the IQ domain; sequence ELRSIVKLQAWWRGTVVRREIGSFKMPKKE.

It belongs to the DRC9 family. In terms of assembly, component of the nexin-dynein regulatory complex (N-DRC). Interacts (via IQ domain) with CALM when calcium levels are low. Does not interact with CALM in the presence of Ca(2+). Interacts with the HSP70 proteins HSPA1L and HSPA8. May form a complex with CAMK4 and HSP70.

Its subcellular location is the cytoplasm. It is found in the cell projection. The protein resides in the cilium. It localises to the flagellum. The protein localises to the cytoskeleton. Its subcellular location is the flagellum axoneme. Functionally, component of the nexin-dynein regulatory complex (N-DRC), a key regulator of ciliary/flagellar motility which maintains the alignment and integrity of the distal axoneme and regulates microtubule sliding in motile axonemes. Binds calmodulin when cellular Ca(2+) levels are low and thereby contributes to the regulation of calcium and calmodulin-dependent protein kinase IV (CAMK4) activity; contributes to the regulation of CAMK4 signaling cascades. Required for normal axoneme assembly in sperm flagella, normal sperm tail formation and for male fertility. In Rattus norvegicus (Rat), this protein is Dynein regulatory complex protein 9 (Iqcg).